The following is a 451-amino-acid chain: Probable asparagine--tRNA ligase, cytoplasmic (451 aa).

It belongs to the class-II aminoacyl-tRNA synthetase family.

It is found in the cytoplasm. It catalyses the reaction tRNA(Asn) + L-asparagine + ATP = L-asparaginyl-tRNA(Asn) + AMP + diphosphate + H(+). The protein is Probable asparagine--tRNA ligase, cytoplasmic of Encephalitozoon cuniculi (strain GB-M1) (Microsporidian parasite).